A 224-amino-acid polypeptide reads, in one-letter code: Toxin coregulated pilin (224 aa).

A propeptide spans 1–25 (MQLLKQLFKKKFVKEEHDKKTGQEG) (atypical leader sequence). Met-26 carries the N-methylmethionine modification. A helical transmembrane segment spans residues 26–46 (MTLLEVIIVLGIMGVVSAGVV). An intrachain disulfide couples Cys-145 to Cys-211.

Its subcellular location is the fimbrium. The protein localises to the membrane. In terms of biological role, major component of the toxin co-regulated pilus (tcp) which is a type IV pilus essential for bacterial aggregation and subsequent colonization in the host small intestine. This chain is Toxin coregulated pilin (tcpA), found in Vibrio cholerae serotype O1 (strain ATCC 39315 / El Tor Inaba N16961).